A 660-amino-acid chain; its full sequence is Arginine--tRNA ligase, cytoplasmic (660 aa).

An N-acetylmethionine modification is found at M1. The could be involved in the assembly of the multisynthetase complex stretch occupies residues 1–72 (MDGLVAQCSA…QAERKRPTKN (72 aa)). L-arginine contacts are provided by residues 200 to 202 (SPN), H211, Y384, D388, and Q412. A 'HIGH' region motif is present at residues 201–212 (PNIAKEMHVGHL). Positions 529-543 (NTAAYLLYAFTRIRS) are interaction with tRNA.

Belongs to the class-I aminoacyl-tRNA synthetase family. Interacts (via N-terminus) with AIMP1 (via N-terminus); this stimulates its catalytic activity. Interacts (via N-terminus) with LARS2 (via C-terminus). Monomer. Part of a multisubunit complex that groups tRNA ligases for Arg (RARS1), Asp (DARS1), Gln (QARS1), Ile (IARS1), Leu (LARS1), Lys (KARS1), Met (MARS1) the bifunctional ligase for Glu and Pro (EPRS1) and the auxiliary subunits AIMP1/p43, AIMP2/p38 and EEF1E1/p18. Interacts with QARS1. Part of a complex composed of RARS1, QARS1 and AIMP1. Detected in dorsal root ganglion.

It is found in the cytoplasm. The protein localises to the cytosol. It catalyses the reaction tRNA(Arg) + L-arginine + ATP = L-arginyl-tRNA(Arg) + AMP + diphosphate. In terms of biological role, forms part of a macromolecular complex that catalyzes the attachment of specific amino acids to cognate tRNAs during protein synthesis. Modulates the secretion of AIMP1 and may be involved in generation of the inflammatory cytokine EMAP2 from AIMP1. This chain is Arginine--tRNA ligase, cytoplasmic (Rars1), found in Rattus norvegicus (Rat).